The primary structure comprises 43 residues: Protein PsbN (43 aa).

The helical transmembrane segment at 5–27 (TLVAIPISCLLVSFTGYALYTAF) threads the bilayer.

It belongs to the PsbN family.

It localises to the plastid. It is found in the chloroplast thylakoid membrane. In terms of biological role, may play a role in photosystem I and II biogenesis. This Sphagnum cuspidatum (Bog moss) protein is Protein PsbN.